Here is a 170-residue protein sequence, read N- to C-terminus: Acetyl-CoA decarbonylase/synthase complex subunit epsilon 2 (170 aa).

Belongs to the CdhB family. As to quaternary structure, heterotetramer of two alpha and two epsilon subunits. The ACDS complex is made up of alpha, epsilon, beta, gamma and delta subunits with a probable stoichiometry of (alpha(2)epsilon(2))(4)-beta(8)-(gamma(1)delta(1))(8).

The protein operates within one-carbon metabolism; methanogenesis from acetate. Part of a complex that catalyzes the reversible cleavage of acetyl-CoA, allowing growth on acetate as sole source of carbon and energy. The alpha-epsilon subcomponent functions as a carbon monoxide dehydrogenase. The precise role of the epsilon subunit is unclear; it may have a stabilizing role within the alpha(2)epsilon(2) component and/or be involved in electron transfer to FAD during a potential FAD-mediated CO oxidation. This chain is Acetyl-CoA decarbonylase/synthase complex subunit epsilon 2 (cdhB2), found in Methanosarcina mazei (strain ATCC BAA-159 / DSM 3647 / Goe1 / Go1 / JCM 11833 / OCM 88) (Methanosarcina frisia).